The primary structure comprises 394 residues: Acryloyl-CoA reductase (NADH) (394 aa).

FAD is bound by residues 135–144 (FALTEPNAGS) and 170–172 (FIS). Ser-144 is a substrate binding site. 254–257 (DGAR) serves as a coordination point for substrate. FAD-binding positions include Arg-282, Gln-293, and 350 to 354 (QIHGG). Glu-377 functions as the Proton acceptor in the catalytic mechanism. Substrate is bound at residue Gly-378. 379-381 (TSE) contributes to the FAD binding site.

As to quaternary structure, heterohexadecamer; tetramer of tetramers. Each tetramer is composed of 2 alpha (AcrC), a beta (AcrA) and a gamma (AcrB) subunit. It depends on FAD as a cofactor.

It is found in the cytoplasm. It catalyses the reaction propanoyl-CoA + NAD(+) = acryloyl-CoA + NADH + H(+). Its function is as follows. Probable catalytic subunit of the acryloyl-CoA reductase complex involved in the pathway of L-alanine fermentation. Catalyzes the irreversible NADH-dependent formation of propionyl-CoA from acryloyl-CoA. It can also use 3-buten-2-one as substrate. The polypeptide is Acryloyl-CoA reductase (NADH) (acrC) (Anaerotignum propionicum (Clostridium propionicum)).